The sequence spans 314 residues: DNA-directed RNA polymerase subunit alpha (314 aa).

The tract at residues methionine 1–serine 227 is alpha N-terminal domain (alpha-NTD). Positions valine 241–asparagine 314 are alpha C-terminal domain (alpha-CTD).

It belongs to the RNA polymerase alpha chain family. In terms of assembly, homodimer. The RNAP catalytic core consists of 2 alpha, 1 beta, 1 beta' and 1 omega subunit. When a sigma factor is associated with the core the holoenzyme is formed, which can initiate transcription.

It carries out the reaction RNA(n) + a ribonucleoside 5'-triphosphate = RNA(n+1) + diphosphate. DNA-dependent RNA polymerase catalyzes the transcription of DNA into RNA using the four ribonucleoside triphosphates as substrates. This chain is DNA-directed RNA polymerase subunit alpha, found in Oenococcus oeni (strain ATCC BAA-331 / PSU-1).